We begin with the raw amino-acid sequence, 170 residues long: Peroxidase 2 (170 aa).

N-linked (GlcNAc...) asparagine glycosylation occurs at asparagine 9. Residue histidine 24 participates in heme b binding. Residue threonine 25 coordinates Ca(2+). Cysteine 31 and cysteine 59 are oxidised to a cystine. Ca(2+) is bound by residues aspartate 73, threonine 76, and aspartate 81.

It belongs to the peroxidase family. Classical plant (class III) peroxidase subfamily. It depends on Ca(2+) as a cofactor. Heme b is required as a cofactor.

It catalyses the reaction 2 a phenolic donor + H2O2 = 2 a phenolic radical donor + 2 H2O. Its function is as follows. Removal of H(2)O(2), oxidation of toxic reductants, biosynthesis and degradation of lignin, suberization, auxin catabolism, response to environmental stresses such as wounding, pathogen attack and oxidative stress. These functions might be dependent on each isozyme/isoform in each plant tissue. Involved in defense response to powdery meldew fungus. This chain is Peroxidase 2, found in Hordeum vulgare (Barley).